The primary structure comprises 305 residues: UDP-3-O-acyl-N-acetylglucosamine deacetylase (305 aa).

Zn(2+)-binding residues include His-78, His-237, and Asp-241. His-264 serves as the catalytic Proton donor.

Belongs to the LpxC family. Zn(2+) is required as a cofactor.

The enzyme catalyses a UDP-3-O-[(3R)-3-hydroxyacyl]-N-acetyl-alpha-D-glucosamine + H2O = a UDP-3-O-[(3R)-3-hydroxyacyl]-alpha-D-glucosamine + acetate. Its pathway is glycolipid biosynthesis; lipid IV(A) biosynthesis; lipid IV(A) from (3R)-3-hydroxytetradecanoyl-[acyl-carrier-protein] and UDP-N-acetyl-alpha-D-glucosamine: step 2/6. Catalyzes the hydrolysis of UDP-3-O-myristoyl-N-acetylglucosamine to form UDP-3-O-myristoylglucosamine and acetate, the committed step in lipid A biosynthesis. The polypeptide is UDP-3-O-acyl-N-acetylglucosamine deacetylase (Burkholderia multivorans (strain ATCC 17616 / 249)).